The following is an 878-amino-acid chain: Multiple C2 and transmembrane domain-containing protein 2 (878 aa).

Disordered regions lie at residues 20–40 (LINLSKKKAKKSPSKPLDLRV) and 143–178 (KPSLGRDAPEEHDKTHGNDDLNASMTSQHFEEESTL). Basic and acidic residues predominate over residues 149 to 161 (DAPEEHDKTHGND). C2 domains follow at residues 177–292 (TLGE…EHIL), 334–452 (SKSS…CLEL), and 486–607 (PSER…CYVL). Positions 210, 216, 263, 265, and 270 each coordinate Ca(2+). Ca(2+)-binding residues include D525, D531, D577, D579, and D585. The chain crosses the membrane as a helical span at residues 694–714 (FVVFLVTVWNFELYMIPLALL). The tract at residues 728–752 (KASSTQDSQESTDVEEEGKEEEKES) is disordered. The segment covering 737–746 (ESTDVEEEGK) has biased composition (acidic residues). Residues 794–814 (PFLSLLACLILAITTVILYFI) form a helical membrane-spanning segment.

Belongs to the MCTP family. It depends on Ca(2+) as a cofactor.

It is found in the membrane. In terms of biological role, might play a role in the development of cardiac outflow tract. This chain is Multiple C2 and transmembrane domain-containing protein 2 (Mctp2), found in Mus musculus (Mouse).